The sequence spans 311 residues: Homoserine kinase (311 aa).

An ATP-binding site is contributed by 88–98 (PEGLGLGSSGA).

The protein belongs to the GHMP kinase family. Homoserine kinase subfamily.

Its subcellular location is the cytoplasm. It carries out the reaction L-homoserine + ATP = O-phospho-L-homoserine + ADP + H(+). The protein operates within amino-acid biosynthesis; L-threonine biosynthesis; L-threonine from L-aspartate: step 4/5. In terms of biological role, catalyzes the ATP-dependent phosphorylation of L-homoserine to L-homoserine phosphate. In Saccharolobus solfataricus (strain ATCC 35092 / DSM 1617 / JCM 11322 / P2) (Sulfolobus solfataricus), this protein is Homoserine kinase.